The chain runs to 184 residues: MEDIEKIKPYVRSFSKALDELKPEIEKLTSKSLDEQLLLLSDERAKLELINRYAYVLSSLMFANMKVLGVKDMSPILGELKRVKSYMDKAKQYDNRITKSNEKSQAEQEKAKNIISNVLDGNKNQFEPSISRSNFQGKHTKFENDELAESTTTKIIDSTDHIRKASSKKSKRLDKVGKKKGGKK.

The tract at residues 157–184 (DSTDHIRKASSKKSKRLDKVGKKKGGKK) is disordered. Basic residues predominate over residues 164-184 (KASSKKSKRLDKVGKKKGGKK).

The protein belongs to the C1D family. Associates with nuclear form of the RNA exosome complex. Interacts with RRP4, RRP6, RRP45 and RRP46.

It is found in the nucleus. Its function is as follows. Required for exosome-dependent processing of pre-rRNA and small nucleolar RNA (snRNA) precursors. Involved in processing of 35S pre-rRNA at the A0, A1 and A2 sites. Required for activity of RRP6 in 7S pre-rRNA processing. Also has a role in 3'-processing of U4 and U5 small nuclear RNAs (snRNAs). Acts as a mRNA export factor. Mediates mRNA degradation upon UV irradiation. Maintains genome integrity where it is involved in both non-homologous end joining (NHEJ) and homologous recombination pathway repair of double strand DNA breaks. During NHEJ, required for joining 3'-overhanging ends. Also involved in telomere length regulation and maintenance. The sequence is that of Exosome complex protein LRP1 (LRP1) from Saccharomyces cerevisiae (strain ATCC 204508 / S288c) (Baker's yeast).